An 890-amino-acid chain; its full sequence is Alanine--tRNA ligase (890 aa).

His-572, His-576, Cys-674, and His-678 together coordinate Zn(2+).

It belongs to the class-II aminoacyl-tRNA synthetase family. It depends on Zn(2+) as a cofactor.

It is found in the cytoplasm. The enzyme catalyses tRNA(Ala) + L-alanine + ATP = L-alanyl-tRNA(Ala) + AMP + diphosphate. In terms of biological role, catalyzes the attachment of alanine to tRNA(Ala) in a two-step reaction: alanine is first activated by ATP to form Ala-AMP and then transferred to the acceptor end of tRNA(Ala). Also edits incorrectly charged Ser-tRNA(Ala) and Gly-tRNA(Ala) via its editing domain. This Saccharopolyspora erythraea (strain ATCC 11635 / DSM 40517 / JCM 4748 / NBRC 13426 / NCIMB 8594 / NRRL 2338) protein is Alanine--tRNA ligase.